A 110-amino-acid polypeptide reads, in one-letter code: Phosphoribosyl-AMP cyclohydrolase (110 aa).

Asp80 is a binding site for Mg(2+). Cys81 is a binding site for Zn(2+). Mg(2+)-binding residues include Asp82 and Asp84. Residues Cys97 and Cys104 each contribute to the Zn(2+) site.

It belongs to the PRA-CH family. In terms of assembly, homodimer. The cofactor is Mg(2+). Zn(2+) serves as cofactor.

It localises to the cytoplasm. The catalysed reaction is 1-(5-phospho-beta-D-ribosyl)-5'-AMP + H2O = 1-(5-phospho-beta-D-ribosyl)-5-[(5-phospho-beta-D-ribosylamino)methylideneamino]imidazole-4-carboxamide. Its pathway is amino-acid biosynthesis; L-histidine biosynthesis; L-histidine from 5-phospho-alpha-D-ribose 1-diphosphate: step 3/9. Its function is as follows. Catalyzes the hydrolysis of the adenine ring of phosphoribosyl-AMP. The chain is Phosphoribosyl-AMP cyclohydrolase from Clostridium botulinum (strain ATCC 19397 / Type A).